A 79-amino-acid polypeptide reads, in one-letter code: Gas vesicle protein A2 (79 aa).

Positions Leu9–Lys19 are alpha helix 1. The tract at residues Val23–Leu31 is beta-strand 1. Positions Val32–Ile34 are beta turn. The tract at residues Glu35–Val43 is beta-strand 2. Residues Val48 to Thr67 form an alpha helix 2 region.

This sequence belongs to the gas vesicle GvpA family. As to quaternary structure, the gas vesicle shell is 2 nm thick and consists of a single layer of this protein. It forms helical ribs nearly perpendicular to the long axis of the vesicle.

It localises to the gas vesicle shell. In terms of biological role, gas vesicles are hollow, gas filled proteinaceous nanostructures found in several microbial planktonic microorganisms. They allow positioning of halobacteria at the optimal depth for growth in the poorly aerated shallow brine pools of their habitat. GvpA forms the gas vesicle shell. This protein can replace the p-gvpA gene in the p-vac locus and increases the critical collapse pressure (CCP) of hybrid gas vesicles from 0.66 MPa to 0.90 MPa. In stationary phase gas vesicles about 30 times more GvpA1 is found than GvpA2. Expression of 2 c-vac DNA fragments containing 2 divergently transcribed regions (gvpE-gvpF-gvpG-gvpH-gvpI-gvpJ-gvpK-gvpL-gvpM and gvpA-gvpC-gvpN-gvpO) allows H.volcanii to produce gas vesicles. All site-directed mutagenesis is tested in H.volcanii. The protein is Gas vesicle protein A2 of Halobacterium salinarum (strain ATCC 700922 / JCM 11081 / NRC-1) (Halobacterium halobium).